A 239-amino-acid polypeptide reads, in one-letter code: Fatty acid metabolism regulator protein (239 aa).

The HTH gntR-type domain occupies 6-74 (QSPAGFAEEY…HGKPTKVNNF (69 aa)). The segment at residues 34-53 (ERELSELIGVTRTTLREVLQ) is a DNA-binding region (H-T-H motif).

As to quaternary structure, homodimer.

The protein localises to the cytoplasm. Multifunctional regulator of fatty acid metabolism. This is Fatty acid metabolism regulator protein from Klebsiella pneumoniae subsp. pneumoniae (strain ATCC 700721 / MGH 78578).